The sequence spans 465 residues: Light-independent protochlorophyllide reductase subunit N (465 aa).

[4Fe-4S] cluster is bound by residues Cys-23, Cys-48, and Cys-108.

It belongs to the BchN/ChlN family. As to quaternary structure, protochlorophyllide reductase is composed of three subunits; ChlL, ChlN and ChlB. Forms a heterotetramer of two ChlB and two ChlN subunits. The cofactor is [4Fe-4S] cluster.

The enzyme catalyses chlorophyllide a + oxidized 2[4Fe-4S]-[ferredoxin] + 2 ADP + 2 phosphate = protochlorophyllide a + reduced 2[4Fe-4S]-[ferredoxin] + 2 ATP + 2 H2O. It functions in the pathway porphyrin-containing compound metabolism; chlorophyll biosynthesis (light-independent). Functionally, component of the dark-operative protochlorophyllide reductase (DPOR) that uses Mg-ATP and reduced ferredoxin to reduce ring D of protochlorophyllide (Pchlide) to form chlorophyllide a (Chlide). This reaction is light-independent. The NB-protein (ChlN-ChlB) is the catalytic component of the complex. This chain is Light-independent protochlorophyllide reductase subunit N, found in Trichodesmium erythraeum (strain IMS101).